The chain runs to 200 residues: Imidazoleglycerol-phosphate dehydratase (200 aa).

Belongs to the imidazoleglycerol-phosphate dehydratase family.

The protein localises to the cytoplasm. It carries out the reaction D-erythro-1-(imidazol-4-yl)glycerol 3-phosphate = 3-(imidazol-4-yl)-2-oxopropyl phosphate + H2O. Its pathway is amino-acid biosynthesis; L-histidine biosynthesis; L-histidine from 5-phospho-alpha-D-ribose 1-diphosphate: step 6/9. The sequence is that of Imidazoleglycerol-phosphate dehydratase from Chlorobium phaeovibrioides (strain DSM 265 / 1930) (Prosthecochloris vibrioformis (strain DSM 265)).